Reading from the N-terminus, the 933-residue chain is Clumping factor A (933 aa).

The first 39 residues, 1 to 39 (MNMKKKEKHAIRKKSIGVASVLVGTLIGFGLLSSKEADA), serve as a signal peptide directing secretion. The YSIRK-G/S signaling motif motif lies at 9-20 (HAIRKKSIGVAS). Disordered stretches follow at residues 34 to 200 (SKEA…SNKD) and 529 to 904 (FNNG…SEDE). A ligand binding A region region spans residues 40-542 (SENSVTQSDS…SGSGDGIDKP (503 aa)). Residues 47 to 65 (SDSASNESKSNDSSSVSAA) are compositionally biased toward low complexity. Over residues 71-105 (TNVSDTKTSSNTNNGETSVAQNPAQQETTQSSSTN) the composition is skewed to polar residues. Residues 106–132 (ATTEETPVTGEATTTTTNQANTPATTQ) show a composition bias toward low complexity. A compositionally biased stretch (polar residues) spans 133 to 200 (SSNTNAEELV…PQSTDASNKD (68 aa)). The span at 547–565 (QPDEPGEIEPIPEDSDSDP) shows a compositional bias: acidic residues. Positions 566–598 (GSDSGSDSNSDSGSDSGSDSTSDSGSDSASDSD) are enriched in low complexity. A compositionally biased stretch (acidic residues) spans 599–861 (SASDSDSASD…DSDSESDSNS (263 aa)). The span at 862–880 (DSESGSNNNVVPPNSPKNG) shows a compositional bias: low complexity. Residues 887 to 896 (NEAKDSKEPL) show a composition bias toward basic and acidic residues. Residues 896–900 (LPDTG) carry the LPXTG sorting signal motif. Thr899 is modified (pentaglycyl murein peptidoglycan amidated threonine). The propeptide at 900–933 (GSEDEANTSLIWGLLASIGSLLLFRRKKENKDKK) is removed by sortase.

It belongs to the serine-aspartate repeat-containing protein (SDr) family.

Its subcellular location is the secreted. The protein localises to the cell wall. Functionally, cell surface-associated protein implicated in virulence. Promotes bacterial attachment exclusively to the gamma-chain of human fibrinogen. Induces formation of bacterial clumps, which diminish the ability of group IIA phospholipase A2 to cause bacterial phospholipid hydrolysis and killing. Significantly decreases macrophage phagocytosis possibly thanks to the clumps, clumped bacteria being too large to be phagocytosed. Dominant factor responsible for human platelet aggregation, which may be an important mechanism for initiating infective endocarditis. Enhances spleen cell proliferative response in vitro, contributing significantly to the immunostimulatory activity of S.aureus. The protein is Clumping factor A (clfA) of Staphylococcus aureus (strain Newman).